The following is a 365-amino-acid chain: DNA replication and repair protein RecF (365 aa).

30–37 (GRNAQGKT) serves as a coordination point for ATP.

The protein belongs to the RecF family.

It localises to the cytoplasm. Functionally, the RecF protein is involved in DNA metabolism; it is required for DNA replication and normal SOS inducibility. RecF binds preferentially to single-stranded, linear DNA. It also seems to bind ATP. This Streptococcus pneumoniae (strain CGSP14) protein is DNA replication and repair protein RecF.